Consider the following 68-residue polypeptide: DNA-directed RNA polymerase subunit Rpo10 (68 aa).

4 residues coordinate Zn(2+): Cys-7, Cys-10, Cys-44, and Cys-45.

Belongs to the archaeal Rpo10/eukaryotic RPB10 RNA polymerase subunit family. Part of the RNA polymerase complex. The cofactor is Zn(2+).

The protein localises to the cytoplasm. The catalysed reaction is RNA(n) + a ribonucleoside 5'-triphosphate = RNA(n+1) + diphosphate. In terms of biological role, DNA-dependent RNA polymerase (RNAP) catalyzes the transcription of DNA into RNA using the four ribonucleoside triphosphates as substrates. This is DNA-directed RNA polymerase subunit Rpo10 from Methanococcus vannielii (strain ATCC 35089 / DSM 1224 / JCM 13029 / OCM 148 / SB).